The sequence spans 261 residues: SLA class II histocompatibility antigen, DQ haplotype C beta chain (261 aa).

Positions 1–31 (MSGMVALRLPRGLWTAALTVMLVVLGAPVAE) are cleaved as a signal peptide. Positions 32–126 (GRDSPQDFVF…IEEGTTLQRR (95 aa)) are beta-1. Topologically, residues 32–230 (GRDSPQDFVF…RAQSESAQSK (199 aa)) are extracellular. 2 disulfides stabilise this stretch: C47-C111 and C149-C205. Residue N51 is glycosylated (N-linked (GlcNAc...) asparagine). Residues 127-220 (VQPTVTISPS…SLQNPILVEW (94 aa)) form a beta-2 region. In terms of domain architecture, Ig-like C1-type spans 129 to 233 (PTVTISPSKA…SESAQSKMLS (105 aa)). Residues 221-230 (RAQSESAQSK) form a connecting peptide region. The helical transmembrane segment at 231-251 (MLSGVGGFVLGLIFLGLGLFI) threads the bilayer. At 252 to 261 (RHRSQKGLVR) the chain is on the cytoplasmic side.

It belongs to the MHC class II family.

Its subcellular location is the membrane. This chain is SLA class II histocompatibility antigen, DQ haplotype C beta chain, found in Sus scrofa (Pig).